A 298-amino-acid polypeptide reads, in one-letter code: Cell wall protein DAN1 (298 aa).

A signal peptide spans 1 to 19 (MSRISILAVAAALVASATA). A disordered region spans residues 122–168 (PASTTEASSTSTSEASSAATESSSSSESSAETSSNAASTQATVSSES). Residue asparagine 275 is the site of GPI-anchor amidated asparagine attachment. Residues 276-298 (GANKFNNGVFGAAAIAGAAALLL) constitute a propeptide, removed in mature form.

Belongs to the SRP1/TIP1 family. In terms of processing, extensively O-glycosylated. The GPI-anchor is attached to the protein in the endoplasmic reticulum and serves to target the protein to the cell surface. There, the glucosamine-inositol phospholipid moiety is cleaved off and the GPI-modified mannoprotein is covalently attached via its lipidless GPI glycan remnant to the 1,6-beta-glucan of the outer cell wall layer.

The protein localises to the secreted. It is found in the cell wall. It localises to the membrane. Its function is as follows. Component of the cell wall. The polypeptide is Cell wall protein DAN1 (DAN1) (Saccharomyces cerevisiae (strain ATCC 204508 / S288c) (Baker's yeast)).